A 110-amino-acid chain; its full sequence is U1-lycotoxin-Ls1jj (110 aa).

The first 20 residues, 1–20 (MKFVLLFGVLLVTLFSYSSA), serve as a signal peptide directing secretion. The propeptide occupies 21 to 44 (EMLDDFDQADEDELLSLIEKEEAR). 4 cysteine pairs are disulfide-bonded: cysteine 47/cysteine 62, cysteine 54/cysteine 71, cysteine 61/cysteine 89, and cysteine 73/cysteine 87.

This sequence belongs to the neurotoxin 19 (CSTX) family. 03 subfamily. Expressed by the venom gland.

It is found in the secreted. The sequence is that of U1-lycotoxin-Ls1jj from Lycosa singoriensis (Wolf spider).